Consider the following 138-residue polypeptide: Small ribosomal subunit protein uS11c (138 aa).

The segment at 1–25 is disordered; the sequence is MAKSIPRTGSRRNVRSGSRKSTRRI. Residues 9–25 are compositionally biased toward basic residues; that stretch reads GSRRNVRSGSRKSTRRI.

It belongs to the universal ribosomal protein uS11 family. In terms of assembly, part of the 30S ribosomal subunit.

The protein localises to the plastid. It is found in the chloroplast. This Eucalyptus globulus subsp. globulus (Tasmanian blue gum) protein is Small ribosomal subunit protein uS11c.